The chain runs to 481 residues: Glutamyl-tRNA(Gln) amidotransferase subunit A (481 aa).

Active-site charge relay system residues include Lys76 and Ser151. Ser175 acts as the Acyl-ester intermediate in catalysis.

Belongs to the amidase family. GatA subfamily. As to quaternary structure, heterotrimer of A, B and C subunits.

It carries out the reaction L-glutamyl-tRNA(Gln) + L-glutamine + ATP + H2O = L-glutaminyl-tRNA(Gln) + L-glutamate + ADP + phosphate + H(+). Its function is as follows. Allows the formation of correctly charged Gln-tRNA(Gln) through the transamidation of misacylated Glu-tRNA(Gln) in organisms which lack glutaminyl-tRNA synthetase. The reaction takes place in the presence of glutamine and ATP through an activated gamma-phospho-Glu-tRNA(Gln). This is Glutamyl-tRNA(Gln) amidotransferase subunit A from Neisseria meningitidis serogroup C (strain 053442).